The following is a 158-amino-acid chain: Fibroblast growth factor 2 (158 aa).

A propeptide spanning residues 1 to 12 (MAAGAAGSITTL) is cleaved from the precursor. Position 39 (asparagine 39) interacts with heparin. A heparin-binding region spans residues 131–147 (KRTGQYKPGPKTGPGQK).

The protein belongs to the heparin-binding growth factors family.

The protein resides in the secreted. It is found in the nucleus. In terms of biological role, acts as a ligand for FGFR1, FGFR2, FGFR3 and FGFR4. Also acts as an integrin ligand which is required for FGF2 signaling. Plays an important role in the regulation of cell survival, cell division, cell differentiation and cell migration. Functions as a potent mitogen in vitro. Can induce angiogenesis. This chain is Fibroblast growth factor 2 (FGF2), found in Gallus gallus (Chicken).